The following is an 81-amino-acid chain: Cytotoxin 1c (81 aa).

An N-terminal signal peptide occupies residues 1 to 21 (MKTLLLTLVVVTIVCLDLGYT). 4 disulfide bridges follow: Cys24–Cys42, Cys35–Cys59, Cys63–Cys74, and Cys75–Cys80.

This sequence belongs to the three-finger toxin family. Short-chain subfamily. Type IA cytotoxin sub-subfamily. In terms of assembly, monomer in solution; Homodimer and oligomer in the presence of negatively charged lipids forming a pore with a size ranging between 20 and 30 Angstroms. In terms of tissue distribution, expressed by the venom gland.

The protein localises to the secreted. It is found in the target cell membrane. In terms of biological role, shows cytolytic activity on many different cells by forming pore in lipid membranes. In vivo, increases heart rate or kills the animal by cardiac arrest. In addition, it binds to heparin with high affinity, interacts with Kv channel-interacting protein 1 (KCNIP1) in a calcium-independent manner, and binds to integrin alpha-V/beta-3 (ITGAV/ITGB3) with moderate affinity. This is Cytotoxin 1c from Naja atra (Chinese cobra).